The primary structure comprises 284 residues: TM2 domain-containing protein almondex (284 aa).

Residues 1 to 32 (MRLQRQCIVVNMRSAIVLIMIFVLTGIRNSET) form the signal peptide. Positions 33 to 63 (ASGGNQMDLSDSKGDHKDNSNASNGNGNAND) are disordered. The Extracellular portion of the chain corresponds to 33–225 (ASGGNQMDLS…NWTQGYRWST (193 aa)). A compositionally biased stretch (basic and acidic residues) spans 42–51 (SDSKGDHKDN). Positions 52–63 (SNASNGNGNAND) are enriched in low complexity. N-linked (GlcNAc...) asparagine glycans are attached at residues asparagine 53, asparagine 89, asparagine 141, asparagine 194, asparagine 206, and asparagine 216. One can recognise a TM2 domain in the interval 220–267 (GYRWSTALLISLTLGGFGADRFYLGHWQEGIGKLFSFGGLGVWTIIDV). Residues 226–246 (ALLISLTLGGFGADRFYLGHW) traverse the membrane as a helical segment. At 247 to 249 (QEG) the chain is on the cytoplasmic side. A helical membrane pass occupies residues 250-270 (IGKLFSFGGLGVWTIIDVLLI). The Extracellular portion of the chain corresponds to 271–284 (SMHYLGPADGSLYI).

This sequence belongs to the TM2 family. Expressed in female ovary, mainly in nurse cells (at protein level). Expressed in the brain at low levels (at protein level).

The protein resides in the membrane. The protein localises to the vesicle. Its function is as follows. Positive regulator of Notch signaling during lateral inhibition and boundary formation. Interacts with Notch signaling at the membrane, at the level of gamma-secretase-mediated S3 cleavage. May regulate Notch signaling by regulating the subcellular localization of N/Notch in a context dependent manner. Maternal neurogenic factor involved in Notch signaling-dependent mesectodermal and neuroectodermal specification during early embryogenesis. Functions cooperatively with bisc/TM2D1 and amrt/TM2D2. Required for maintenance of neuronal function. Involved in imaginal specification of eyes and wings. In Drosophila melanogaster (Fruit fly), this protein is TM2 domain-containing protein almondex.